The primary structure comprises 355 residues: UDP-N-acetylglucosamine--N-acetylmuramyl-(pentapeptide) pyrophosphoryl-undecaprenol N-acetylglucosamine transferase (355 aa).

Residues 15-17, Asn-127, Arg-163, Ser-191, Ile-244, 263-268, and Gln-288 contribute to the UDP-N-acetyl-alpha-D-glucosamine site; these read TGG and ALTVSE.

It belongs to the glycosyltransferase 28 family. MurG subfamily.

The protein resides in the cell inner membrane. It catalyses the reaction di-trans,octa-cis-undecaprenyl diphospho-N-acetyl-alpha-D-muramoyl-L-alanyl-D-glutamyl-meso-2,6-diaminopimeloyl-D-alanyl-D-alanine + UDP-N-acetyl-alpha-D-glucosamine = di-trans,octa-cis-undecaprenyl diphospho-[N-acetyl-alpha-D-glucosaminyl-(1-&gt;4)]-N-acetyl-alpha-D-muramoyl-L-alanyl-D-glutamyl-meso-2,6-diaminopimeloyl-D-alanyl-D-alanine + UDP + H(+). Its pathway is cell wall biogenesis; peptidoglycan biosynthesis. Functionally, cell wall formation. Catalyzes the transfer of a GlcNAc subunit on undecaprenyl-pyrophosphoryl-MurNAc-pentapeptide (lipid intermediate I) to form undecaprenyl-pyrophosphoryl-MurNAc-(pentapeptide)GlcNAc (lipid intermediate II). The protein is UDP-N-acetylglucosamine--N-acetylmuramyl-(pentapeptide) pyrophosphoryl-undecaprenol N-acetylglucosamine transferase of Salmonella dublin (strain CT_02021853).